The primary structure comprises 1114 residues: OTU domain-containing protein 4 (1114 aa).

N-acetylmethionine is present on M1. The segment at 1–22 is disordered; sequence MEAAVGVPDGGDQGGAGPREDA. Residues 8 to 17 are compositionally biased toward gly residues; the sequence is PDGGDQGGAG. The 122-residue stretch at 34 to 155 folds into the OTU domain; the sequence is LYRKLVAKDG…GNHYDIVYPI (122 aa). The segment at 39–45 is cys-loop; sequence VAKDGSC. The active site involves D42. Residue C45 is the Nucleophile of the active site. Positions 94–104 are variable-loop; it reads LENPQEWVGQV. Y120 carries the phosphotyrosine modification. Phosphoserine is present on residues S126 and S128. Residue T131 is modified to Phosphothreonine. Residues 143 to 148 are his-loop; the sequence is FSNGNH. H148 is an active-site residue. A phosphoserine mark is found at S166, S199, S202, S204, and S341. Residues 323–449 form a disordered region; sequence KHTSKNLKAP…FGLSPEERRE (127 aa). Positions 392-404 are enriched in low complexity; it reads FSSHSSGSQSQKF. The span at 420–435 shows a compositional bias: basic and acidic residues; it reads RKPDRERVEDFDHTSR. Position 439 is a phosphotyrosine (Y439). Residue S443 is modified to Phosphoserine. Phosphotyrosine is present on Y460. The tract at residues 472-567 is disordered; it reads ALSSSSVNQS…PAEQKPAEHV (96 aa). Low complexity predominate over residues 474–487; it reads SSSSVNQSASQSSN. A compositionally biased stretch (basic and acidic residues) spans 496–529; sequence HVGDRKGSRRRMDTEERKDKDSIHGHSQLDKRPE. A phosphoserine mark is found at S546, S893, and S900. Residues 911–1114 form a disordered region; it reads EFPEARGEHV…MGDGHRGQHT (204 aa). Composition is skewed to basic and acidic residues over residues 913 to 922 and 969 to 1000; these read PEARGEHVHS and NRERETVPVELEPKRTIQSLKEKTEKVKDPKT. Phosphoserine is present on residues S1006, S1011, S1014, S1023, and S1024. Polar residues predominate over residues 1039–1048; the sequence is SKQFYNQTYG. S1049 is subject to Phosphoserine. Basic and acidic residues-rich tracts occupy residues 1067 to 1086 and 1096 to 1114; these read VRSEESWKGQPSRSRDEGYQ and FRGDRRRSGMGDGHRGQHT.

Interacts with MYD88; the interaction is direct. Interacts with ALKBH3; the interaction is direct. Interacts with USP7; the interaction is direct. Interacts with USP9X; the interaction is direct. Phosphorylated on Ser-202 and Ser-204 likely by CSNK2A1-CSNK2A2 serine/threonine-protein kinase complex. Activates 'Lys-63'-specific deubiquitinase activity.

The protein resides in the cytoplasm. The protein localises to the nucleus. It carries out the reaction Thiol-dependent hydrolysis of ester, thioester, amide, peptide and isopeptide bonds formed by the C-terminal Gly of ubiquitin (a 76-residue protein attached to proteins as an intracellular targeting signal).. With respect to regulation, phosphorylation on Ser-202 and Ser-204 induces 'Lys-63'-specific deubiquitinase activity. Deubiquitinase which hydrolyzes the isopeptide bond between the ubiquitin C-terminus and the lysine epsilon-amino group of the target protein. May negatively regulate inflammatory and pathogen recognition signaling in innate immune response. Upon phosphorylation at Ser-202 and Ser-204 residues, via IL-1 receptor and Toll-like receptor signaling pathway, specifically deubiquitinates 'Lys-63'-polyubiquitinated MYD88 adapter protein triggering down-regulation of NF-kappa-B-dependent transcription of inflammatory mediators. Independently of the catalytic activity, acts as a scaffold for alternative deubiquitinases to assemble specific deubiquitinase-substrate complexes. Associates with USP7 and USP9X deubiquitinases to stabilize alkylation repair enzyme ALKBH3, thereby promoting the repair of alkylated DNA lesions. The protein is OTU domain-containing protein 4 of Homo sapiens (Human).